Consider the following 54-residue polypeptide: Conotoxin mr5.4b (54 aa).

Residues 1–14 (ILLLLIASAPSVDA) form the signal peptide. Residues 15–40 (QLKTKDDVPLASFHANVKRTLQKLLN) constitute a propeptide that is removed on maturation. Position 52 is a 4-carboxyglutamate (Glu52).

This sequence belongs to the conotoxin T superfamily. In terms of processing, contains 2 disulfide bonds that can be either 'C1-C3, C2-C4' or 'C1-C4, C2-C3', since these disulfide connectivities have been observed for conotoxins with cysteine framework V (for examples, see AC P0DQQ7 and AC P81755). In terms of tissue distribution, expressed by the venom duct.

The protein localises to the secreted. This chain is Conotoxin mr5.4b, found in Conus marmoreus (Marble cone).